A 259-amino-acid polypeptide reads, in one-letter code: Adenosylcobinamide-GDP ribazoletransferase (259 aa).

Helical transmembrane passes span 9 to 29, 43 to 63, 64 to 84, 118 to 138, 143 to 163, and 196 to 216; these read NLFF…WIEV, LVGL…LYWV, SPSV…GGFH, ALAL…LALF, VSLA…SFIF, and VLAL…GLVI.

It belongs to the CobS family. It depends on Mg(2+) as a cofactor.

The protein localises to the cell inner membrane. The catalysed reaction is alpha-ribazole + adenosylcob(III)inamide-GDP = adenosylcob(III)alamin + GMP + H(+). The enzyme catalyses alpha-ribazole 5'-phosphate + adenosylcob(III)inamide-GDP = adenosylcob(III)alamin 5'-phosphate + GMP + H(+). It functions in the pathway cofactor biosynthesis; adenosylcobalamin biosynthesis; adenosylcobalamin from cob(II)yrinate a,c-diamide: step 7/7. In terms of biological role, joins adenosylcobinamide-GDP and alpha-ribazole to generate adenosylcobalamin (Ado-cobalamin). Also synthesizes adenosylcobalamin 5'-phosphate from adenosylcobinamide-GDP and alpha-ribazole 5'-phosphate. The sequence is that of Adenosylcobinamide-GDP ribazoletransferase from Shewanella halifaxensis (strain HAW-EB4).